The primary structure comprises 358 residues: Dual-specificity RNA methyltransferase RlmN (358 aa).

Glutamate 91 serves as the catalytic Proton acceptor. Residues 98–335 (SQGRITQCLS…AIIRKSKGAD (238 aa)) enclose the Radical SAM core domain. Residues cysteine 105 and cysteine 340 are joined by a disulfide bond. 3 residues coordinate [4Fe-4S] cluster: cysteine 112, cysteine 116, and cysteine 119. S-adenosyl-L-methionine is bound by residues 164-165 (GE), serine 196, 219-221 (SLH), and asparagine 295. Cysteine 340 acts as the S-methylcysteine intermediate in catalysis.

The protein belongs to the radical SAM superfamily. RlmN family. The cofactor is [4Fe-4S] cluster.

It is found in the cytoplasm. The enzyme catalyses adenosine(2503) in 23S rRNA + 2 reduced [2Fe-2S]-[ferredoxin] + 2 S-adenosyl-L-methionine = 2-methyladenosine(2503) in 23S rRNA + 5'-deoxyadenosine + L-methionine + 2 oxidized [2Fe-2S]-[ferredoxin] + S-adenosyl-L-homocysteine. The catalysed reaction is adenosine(37) in tRNA + 2 reduced [2Fe-2S]-[ferredoxin] + 2 S-adenosyl-L-methionine = 2-methyladenosine(37) in tRNA + 5'-deoxyadenosine + L-methionine + 2 oxidized [2Fe-2S]-[ferredoxin] + S-adenosyl-L-homocysteine. Specifically methylates position 2 of adenine 2503 in 23S rRNA and position 2 of adenine 37 in tRNAs. m2A2503 modification seems to play a crucial role in the proofreading step occurring at the peptidyl transferase center and thus would serve to optimize ribosomal fidelity. This chain is Dual-specificity RNA methyltransferase RlmN, found in Oleidesulfovibrio alaskensis (strain ATCC BAA-1058 / DSM 17464 / G20) (Desulfovibrio alaskensis).